Reading from the N-terminus, the 248-residue chain is DNA polymerase sliding clamp 2 (248 aa).

The protein belongs to the PCNA family. As to quaternary structure, the subunits circularize to form a toroid; DNA passes through its center. Replication factor C (RFC) is required to load the toroid on the DNA. Forms a dimeric complex with PCNA3 and trimeric complexes PCNA123 and PCNA323; does not form homotrimers. Crystal structures show a heterotetramer of 2 PCNA2 and 2 PCNA3, which would be large enough to clamp a Holliday junction.

In terms of biological role, sliding clamp subunit that acts as a moving platform for DNA processing. Responsible for tethering the catalytic subunit of DNA polymerase and other proteins to DNA during high-speed replication. Both trimeric complexes inhibit DNA ligase and both 3'-5' and 5'-3' activity of Hel308 (Hjm) helicase, but stimulate Hjc, the Holliday junction cleavage enzyme. This is DNA polymerase sliding clamp 2 from Sulfurisphaera tokodaii (strain DSM 16993 / JCM 10545 / NBRC 100140 / 7) (Sulfolobus tokodaii).